A 419-amino-acid polypeptide reads, in one-letter code: Voltage-gated potassium channel subunit beta-1 (419 aa).

A disordered region spans residues 1–52 (MLAARTGAAGSQISEENTKLRRQSGFSVAGKDKSPKKASENAKDSSLSPSGE). The segment covering 30–43 (GKDKSPKKASENAK) has biased composition (basic and acidic residues). NADP(+)-binding residues include Thr108, Trp109, Gln115, and Asp137. The active-site Proton donor/acceptor is Tyr142. NADP(+) is bound by residues Asn210, Ser240, Arg241, Gln266, Trp295, Ser296, Pro297, Leu298, Ala299, Cys300, Lys306, Arg316, Gly375, Ser377, Gln381, Glu384, and Asn385.

This sequence belongs to the shaker potassium channel beta subunit family. In terms of assembly, homotetramer. Interaction with tetrameric potassium channel alpha subunits gives rise to a heterooctamer. Identified in potassium channel complexes containing KCNA1, KCNA2, KCNA4, KCNA5, KCNA6, KCNAB1 and KCNAB2. Part of a complex containing KCNA1, KCNA4 and LGI1; interaction with LGI1 inhibits down-regulation of KCNA1 channel activity. Interacts with the dimer formed by GNB1 and GNG2; this enhances KCNA1 binding. Interacts with SQSTM1. As to expression, in brain, expression is most prominent in caudate nucleus, hippocampus and thalamus. Significant expression also detected in amygdala and subthalamic nucleus. Also expressed in both healthy and cardiomyopathic heart. Up to four times more abundant in left ventricle than left atrium.

The protein resides in the cytoplasm. Its subcellular location is the membrane. It is found in the cell membrane. The enzyme catalyses a primary alcohol + NADP(+) = an aldehyde + NADPH + H(+). The catalysed reaction is a secondary alcohol + NADP(+) = a ketone + NADPH + H(+). Regulatory subunit of the voltage-gated potassium (Kv) Shaker channels composed of pore-forming and potassium-conducting alpha subunits and of regulatory beta subunits. The beta-1/KCNAB1 cytoplasmic subunit mediates closure of delayed rectifier potassium channels by physically obstructing the pore via its N-terminal domain and increases the speed of channel closure for other family members. Promotes the inactivation of Kv1.1/KCNA1, Kv1.2/KCNA2, Kv1.4/KCNA4, Kv1.5/KCNA5 and Kv1.6/KCNA6 alpha subunit-containing channels. Displays nicotinamide adenine dinucleotide phosphate (NADPH)-dependent aldoketoreductase activity by catalyzing the NADPH-dependent reduction of a variety of endogenous aldehydes and ketones. The binding of NADPH is required for efficient down-regulation of potassium channel activity. Oxidation of the bound NADPH restrains N-terminal domain from blocking the channel, thereby decreasing N-type inactivation of potassium channel activity. Its function is as follows. Isoform KvB1.2 shows no effect on KCNA1, KCNA2 or KCNB1. This is Voltage-gated potassium channel subunit beta-1 from Homo sapiens (Human).